The chain runs to 705 residues: MTRRTSIERYRNIGISAHIDAGKTTTTERILFYTGITHKLGEVHEGAATMDWMEQERGITITSAATTAFWRGMAGNYPEHRINIIDTPGHVDFTIEVERSMRVLDGACMVYDSVGGVQPQSETVWRQANKYGVPRIAFVNKMDRVGADFFRVQRQIVERLKGDAVPIQIPVGAEDHFEGVVDLVKMKAIIWDDASQGVRFEYRDIPPELQAQAEQWREKMIEKAAEANEALLEKYLSGQPLSEDEIKSGLRARTVANEIVPMLCGSAFKNKGVQAMLDAVIDYLPSPADVPAIIGHDERDREIERHPADDEPFSALAFKIMTDPFVGQLVFFRVYSGVVKSGDSVLNPLKSKKERLGRILQMHANERREISEVYAGDIAAAVGIKEITTGDTLTDPAHVIILERMTFPEPVISQAVEPRTKADQEKMGIALNRLAQEDPSFRVRTDEESGQTIISGMGELHLEILVDRMKREFGVEANVGKPQVAYRETIRSTVTDVEGKFVKQSGGRGQYGHVVLKLEPQEQGKGYEFVDAIKGGVVPREFIPAVDRGVRETLNTGVLAGYPVVDVKVTLVFGSYHDVDSNENAFRMAASMAFKEGMRRAKPVLLEPMMHVEVETPEDFTGNVMGDLSSRRGMVQGMEDIAGGGGKLVRAEVPLAEMFGYSTSLRSLTQGRATYSMEFKHYAEAPRQVAEQIIAARGSGAAARG.

In terms of domain architecture, tr-type G spans 8–288 (ERYRNIGISA…AVIDYLPSPA (281 aa)). GTP contacts are provided by residues 17 to 24 (AHIDAGKT), 86 to 90 (DTPGH), and 140 to 143 (NKMD).

This sequence belongs to the TRAFAC class translation factor GTPase superfamily. Classic translation factor GTPase family. EF-G/EF-2 subfamily.

It is found in the cytoplasm. In terms of biological role, catalyzes the GTP-dependent ribosomal translocation step during translation elongation. During this step, the ribosome changes from the pre-translocational (PRE) to the post-translocational (POST) state as the newly formed A-site-bound peptidyl-tRNA and P-site-bound deacylated tRNA move to the P and E sites, respectively. Catalyzes the coordinated movement of the two tRNA molecules, the mRNA and conformational changes in the ribosome. This Bordetella parapertussis (strain 12822 / ATCC BAA-587 / NCTC 13253) protein is Elongation factor G 2.